Here is a 1083-residue protein sequence, read N- to C-terminus: Chitin synthase 2 (1083 aa).

Basic and acidic residues-rich tracts occupy residues Met-1–Phe-10 and Asp-18–Glu-30. 2 disordered regions span residues Met-1 to Asp-248 and Asp-260 to Glu-294. Asn-23 carries an N-linked (GlcNAc...) asparagine glycan. Composition is skewed to polar residues over residues Ser-38–Leu-49 and Ala-61–Ser-70. Asn-67 is a glycosylation site (N-linked (GlcNAc...) asparagine). 2 stretches are compositionally biased toward basic and acidic residues: residues Leu-78 to Gln-100 and Arg-117 to Pro-128. 3 stretches are compositionally biased toward polar residues: residues Ser-132 to Gly-148, Arg-177 to Ser-191, and Ser-282 to Leu-292. Asn-417 carries N-linked (GlcNAc...) asparagine glycosylation. 8 helical membrane passes run Trp-708–Phe-728, Phe-747–Val-767, Thr-785–Leu-805, Ile-820–Ile-840, Asn-860–Leu-880, Ser-889–Cys-909, Tyr-987–Tyr-1007, and Phe-1020–Ala-1040.

Belongs to the chitin synthase family. Class II subfamily.

The protein resides in the cell membrane. The catalysed reaction is [(1-&gt;4)-N-acetyl-beta-D-glucosaminyl](n) + UDP-N-acetyl-alpha-D-glucosamine = [(1-&gt;4)-N-acetyl-beta-D-glucosaminyl](n+1) + UDP + H(+). Its function is as follows. Polymerizes chitin, a structural polymer of the cell wall and septum, by transferring the sugar moiety of UDP-GlcNAc to the non-reducing end of the growing chitin polymer. Plays a critical role in cell wall integrity and virulence. This chain is Chitin synthase 2, found in Fusarium oxysporum f. sp. lycopersici (strain 4287 / CBS 123668 / FGSC 9935 / NRRL 34936) (Fusarium vascular wilt of tomato).